The primary structure comprises 1216 residues: Sodium/potassium/calcium exchanger 1 (1216 aa).

The Extracellular segment spans residues 1 to 446 (MGKLIRMGAQ…DLFSVEERRQ (446 aa)). Residues 94–196 (EATAGRDGTP…KYSPSPLGRM (103 aa)) are disordered. Composition is skewed to polar residues over residues 110 to 135 (NTPS…TPTG) and 144 to 166 (SATP…SYTR). Residues asparagine 290 and asparagine 303 are each glycosylated (N-linked (GlcNAc...) asparagine). A helical transmembrane segment spans residues 447–467 (GWVVLHIFGMMYVFVALAIVC). The Cytoplasmic segment spans residues 468-491 (DEYFVPALGVITDKLQISEDVAGA). One copy of the Alpha-1 repeat lies at 488–528 (VAGATFMAAGGSAPELFTSLIGVFISHSNVGIGTIVGSAVF). A helical transmembrane segment spans residues 492–512 (TFMAAGGSAPELFTSLIGVFI). Residues 513 to 518 (SHSNVG) are Extracellular-facing. A helical transmembrane segment spans residues 519-539 (IGTIVGSAVFNILFVIGTCAL). Residues 540-557 (FSREILNLTWWPLFRDIT) lie on the Cytoplasmic side of the membrane. A helical membrane pass occupies residues 558–578 (FYIFDLMMLILFFLDSLIAWW). A topological domain (extracellular) is located at residue glutamate 579. The helical transmembrane segment at 580–600 (SVLLLLAYAFYVFTMKWNQQL) threads the bilayer. Residues 601–1024 (ELWVKEQLNK…SLEWPETRRK (424 aa)) lie on the Cytoplasmic side of the membrane. Position 652 is a phosphoserine (serine 652). The segment at 677 to 1018 (GEARPSKDKE…ENEQPLSLEW (342 aa)) is disordered. A compositionally biased stretch (basic and acidic residues) spans 702 to 712 (AESKPEEEPAK). Threonine 717 is modified (phosphothreonine). One copy of the 1; approximate repeat lies at 796 to 811 (DEDEGEIQAEGGEVKG). Residues 796–928 (DEDEGEIQAE…QAGEAGEVEG (133 aa)) form an 8 X 17 AA tandem repeats of D-E-D-E-G-E-I-Q-A-G-E-[GA]-G-E-V-[EK]-G region. 6 repeat units span residues 812 to 828 (DEDE…EVEG), 829 to 845 (DEDE…EVEG), 846 to 862 (DEDE…EVEG), 863 to 879 (DEDE…EVEG), 880 to 896 (DEDE…EVEG), and 897 to 913 (DEDE…EVKG). Acidic residues-rich tracts occupy residues 824–834 (GEVEGDEDEGE), 841–851 (GEVEGDEDEGE), 858–868 (GEVEGDEDEGE), 875–885 (GEVEGDEDEGE), 892–902 (GEVEGDEDEGE), 924–941 (GEVE…DEGE), and 981–1011 (GDSE…EENE). Residues 914 to 928 (DEGEIQAGEAGEVEG) form an 8; approximate repeat. A helical membrane pass occupies residues 1025–1045 (QAIYLFLLPIVFPLWLTVPDV). Topologically, residues 1046–1052 (RRLEAKK) are extracellular. The helical transmembrane segment at 1053–1073 (FFVITFLGSILWIAMFSYLMV) threads the bilayer. Residues 1074 to 1088 (WWAHQVGETIGISEE) are Cytoplasmic-facing. Residues 1089 to 1109 (IMGLTILAAGTSIPDLITSVI) form a helical membrane-spanning segment. The stretch at 1096–1127 (AAGTSIPDLITSVIVARKGLGDMAVSSSVGSN) is one Alpha-2 repeat. The Extracellular segment spans residues 1110–1127 (VARKGLGDMAVSSSVGSN). A helical membrane pass occupies residues 1128–1148 (IFDITVGLPLPWMLFSLINGL). The Cytoplasmic segment spans residues 1149–1157 (QPVAVSSNG). The helical transmembrane segment at 1158–1178 (LFCAIVLLFLMLLFVISSIAL) threads the bilayer. At 1179 to 1185 (CKWRMNK) the chain is on the extracellular side. Residues 1186–1206 (ILGFTMFLLYFVFLIISVMLE) traverse the membrane as a helical segment. The Cytoplasmic segment spans residues 1207-1216 (DRIISCPVSV).

Belongs to the Ca(2+):cation antiporter (CaCA) (TC 2.A.19) family. SLC24A subfamily. In terms of processing, the uncleaved signal sequence is required for efficient membrane targeting and proper membrane integration and topology. Post-translationally, glycosylated. In terms of tissue distribution, retina.

The protein localises to the cell membrane. The catalysed reaction is Ca(2+)(out) + K(+)(out) + 4 Na(+)(in) = Ca(2+)(in) + K(+)(in) + 4 Na(+)(out). Its function is as follows. Calcium, potassium:sodium antiporter that transports 1 Ca(2+) and 1 K(+) in exchange for 4 Na(+). Critical component of the visual transduction cascade, controlling the calcium concentration of outer segments during light and darkness. Light causes a rapid lowering of cytosolic free calcium in the outer segment of both retinal rod and cone photoreceptors and the light-induced lowering of calcium is caused by extrusion via this protein which plays a key role in the process of light adaptation. This chain is Sodium/potassium/calcium exchanger 1 (SLC24A1), found in Bos taurus (Bovine).